The following is a 188-amino-acid chain: Acyl-acyl carrier protein thioesterase ATL2, chloroplastic (188 aa).

Residues methionine 1 to glycine 47 constitute a chloroplast transit peptide. Aspartate 64 is an active-site residue.

It belongs to the 4-hydroxybenzoyl-CoA thioesterase family. In terms of tissue distribution, expressed in endodermal and peridermal cells in young and mature roots, in boundaries of stem lateral organs and developing seeds.

The protein localises to the plastid. The protein resides in the chloroplast. Its function is as follows. Acyl-ACP thioesterase involved in the production of fatty acids and beta-keto fatty acids. Can produce beta-keto fatty acids of medium chain (8:0 and 10:0) and small amounts of 8:0 fatty acid when expressed in a heterologous organism (E.coli). May play a role in suberin biosynthesis. This chain is Acyl-acyl carrier protein thioesterase ATL2, chloroplastic, found in Arabidopsis thaliana (Mouse-ear cress).